A 200-amino-acid chain; its full sequence is Peptidyl-tRNA hydrolase (200 aa).

Tyrosine 23 is a binding site for tRNA. Histidine 28 serves as the catalytic Proton acceptor. TRNA is bound by residues phenylalanine 79, asparagine 81, and asparagine 127.

This sequence belongs to the PTH family. Monomer.

It is found in the cytoplasm. The catalysed reaction is an N-acyl-L-alpha-aminoacyl-tRNA + H2O = an N-acyl-L-amino acid + a tRNA + H(+). Functionally, hydrolyzes ribosome-free peptidyl-tRNAs (with 1 or more amino acids incorporated), which drop off the ribosome during protein synthesis, or as a result of ribosome stalling. Its function is as follows. Catalyzes the release of premature peptidyl moieties from peptidyl-tRNA molecules trapped in stalled 50S ribosomal subunits, and thus maintains levels of free tRNAs and 50S ribosomes. The polypeptide is Peptidyl-tRNA hydrolase (Streptomyces coelicolor (strain ATCC BAA-471 / A3(2) / M145)).